The chain runs to 323 residues: Glyoxylate/hydroxypyruvate reductase HPR3 (323 aa).

NADP(+) contacts are provided by residues 160–163 (LGSI), 182–184 (SRS), and 238–240 (VGR). Catalysis depends on residues arginine 240 and glutamate 269. The active-site Proton donor is histidine 287. 287–289 (HFA) contacts NADP(+).

This sequence belongs to the D-isomer specific 2-hydroxyacid dehydrogenase family. GyaR subfamily. Homodimer.

It catalyses the reaction glycolate + NADP(+) = glyoxylate + NADPH + H(+). The enzyme catalyses (R)-glycerate + NADP(+) = 3-hydroxypyruvate + NADPH + H(+). With respect to regulation, inhibited by oxalate. Catalyzes the NADPH-dependent reduction of glyoxylate and hydroxypyruvate (HP) into glycolate and glycerate. Mostly active in the presence of NADPH and glyoxylate. The sequence is that of Glyoxylate/hydroxypyruvate reductase HPR3 (HPR3) from Arabidopsis thaliana (Mouse-ear cress).